A 300-amino-acid polypeptide reads, in one-letter code: 4-diphosphocytidyl-2-C-methyl-D-erythritol kinase (300 aa).

Lys-12 is an active-site residue. ATP is bound at residue 94–104 (PAQAGIGGGSS). The active site involves Asp-136.

Belongs to the GHMP kinase family. IspE subfamily.

The catalysed reaction is 4-CDP-2-C-methyl-D-erythritol + ATP = 4-CDP-2-C-methyl-D-erythritol 2-phosphate + ADP + H(+). The protein operates within isoprenoid biosynthesis; isopentenyl diphosphate biosynthesis via DXP pathway; isopentenyl diphosphate from 1-deoxy-D-xylulose 5-phosphate: step 3/6. Catalyzes the phosphorylation of the position 2 hydroxy group of 4-diphosphocytidyl-2C-methyl-D-erythritol. This Verminephrobacter eiseniae (strain EF01-2) protein is 4-diphosphocytidyl-2-C-methyl-D-erythritol kinase.